A 102-amino-acid polypeptide reads, in one-letter code: Small ribosomal subunit protein bS6 (102 aa).

Belongs to the bacterial ribosomal protein bS6 family.

Its function is as follows. Binds together with bS18 to 16S ribosomal RNA. The polypeptide is Small ribosomal subunit protein bS6 (Solidesulfovibrio magneticus (strain ATCC 700980 / DSM 13731 / RS-1) (Desulfovibrio magneticus)).